The chain runs to 304 residues: CBY1-interacting BAR domain-containing protein 2 (304 aa).

The tract at residues 6–217 is BAR-like; it reads SRDSQVRVME…EKYDLERDLL (212 aa).

The protein belongs to the CIBAR family. Homodimer (via BAR-like domain). Heterodimer (via BAR-like domain) with FAM92A. Interacts with CBY1. As to expression, restricted to certain tissues, most prominently expressed in multicilaited tissues.

It is found in the cytoplasm. The protein localises to the cytoskeleton. It localises to the microtubule organizing center. Its subcellular location is the centrosome. The protein resides in the centriole. It is found in the cilium basal body. Its function is as follows. May play a role in ciliogenesis. In cooperation with CBY1 may facilitate ciliogenesis likely by the recruitment and fusion of endosomal vesicles at distal appendages during early stages of ciliogenesis. This Homo sapiens (Human) protein is CBY1-interacting BAR domain-containing protein 2.